We begin with the raw amino-acid sequence, 691 residues long: DNA ligase (691 aa).

NAD(+) contacts are provided by residues 41 to 45, 90 to 91, and glutamate 130; these read DAEYD and SL. The active-site N6-AMP-lysine intermediate is lysine 132. Residues arginine 153, glutamate 190, lysine 307, and lysine 331 each contribute to the NAD(+) site. Zn(2+) is bound by residues cysteine 425, cysteine 428, cysteine 443, and cysteine 449. The region spanning 610-691 is the BRCT domain; sequence APQGVLAGKT…MHTLLEGHAR (82 aa).

This sequence belongs to the NAD-dependent DNA ligase family. LigA subfamily. Mg(2+) is required as a cofactor. Requires Mn(2+) as cofactor.

It carries out the reaction NAD(+) + (deoxyribonucleotide)n-3'-hydroxyl + 5'-phospho-(deoxyribonucleotide)m = (deoxyribonucleotide)n+m + AMP + beta-nicotinamide D-nucleotide.. Its function is as follows. DNA ligase that catalyzes the formation of phosphodiester linkages between 5'-phosphoryl and 3'-hydroxyl groups in double-stranded DNA using NAD as a coenzyme and as the energy source for the reaction. It is essential for DNA replication and repair of damaged DNA. This is DNA ligase from Burkholderia pseudomallei (strain 668).